We begin with the raw amino-acid sequence, 695 residues long: RING finger protein 145 (695 aa).

The next 13 membrane-spanning stretches (helical) occupy residues 53–73 (YLAL…LTLP), 77–97 (LAKL…HQIS), 123–143 (FITA…VMKT), 146–166 (IWLF…IPIE), 168–188 (IVVI…YFLA), 225–245 (LVVP…QIYT), 275–295 (YSLL…LTLC), 316–336 (TEGV…LQVV), 340–360 (FLLS…MLEI), 384–404 (SLCL…CQFF), 410–430 (LLII…TLFV), 460–480 (LLEF…TVFG), and 482–502 (WTVM…WLRA). Residues 537 to 575 (CSICYQDMNSAVITPCSHFFHPGCLKKWLYVQETCPLCH) form an RING-type; atypical zinc finger. Residues 589 to 604 (SGSSTNPVVEQSANNP) show a composition bias toward polar residues. Residues 589–608 (SGSSTNPVVEQSANNPPQEP) form a disordered region.

The protein localises to the membrane. The polypeptide is RING finger protein 145 (rnf145) (Xenopus laevis (African clawed frog)).